Consider the following 652-residue polypeptide: UvrABC system protein C (652 aa).

The GIY-YIG domain maps to 20-99; it reads PEPGCYLMRD…IKNHQPHFNV (80 aa). A UVR domain is found at 209-244; it reads DELQRLLDEQMNRYAERLDFESAARVRDQLQGLDQL.

The protein belongs to the UvrC family. As to quaternary structure, interacts with UvrB in an incision complex.

Its subcellular location is the cytoplasm. Functionally, the UvrABC repair system catalyzes the recognition and processing of DNA lesions. UvrC both incises the 5' and 3' sides of the lesion. The N-terminal half is responsible for the 3' incision and the C-terminal half is responsible for the 5' incision. This Parasynechococcus marenigrum (strain WH8102) protein is UvrABC system protein C.